The chain runs to 228 residues: uncharacterized protein (228 aa).

2 disordered regions span residues 1–62 (MQRP…VGRF) and 160–228 (SPRP…LSGV). The span at 13-33 (AASTRAPPRPSAPQQGRRQPS) shows a compositional bias: low complexity. The segment covering 167 to 176 (RGQQVTQDGP) has biased composition (polar residues).

This is an uncharacterized protein from Homo sapiens (Human).